A 198-amino-acid chain; its full sequence is Protein GrpE (198 aa).

The protein belongs to the GrpE family. As to quaternary structure, homodimer.

It is found in the cytoplasm. Participates actively in the response to hyperosmotic and heat shock by preventing the aggregation of stress-denatured proteins, in association with DnaK and GrpE. It is the nucleotide exchange factor for DnaK and may function as a thermosensor. Unfolded proteins bind initially to DnaJ; upon interaction with the DnaJ-bound protein, DnaK hydrolyzes its bound ATP, resulting in the formation of a stable complex. GrpE releases ADP from DnaK; ATP binding to DnaK triggers the release of the substrate protein, thus completing the reaction cycle. Several rounds of ATP-dependent interactions between DnaJ, DnaK and GrpE are required for fully efficient folding. This Actinobacillus pleuropneumoniae serotype 5b (strain L20) protein is Protein GrpE.